The chain runs to 1480 residues: C-type mannose receptor 2 (1480 aa).

Residues M1–P30 form the signal peptide. Residues A31–A1413 are Extracellular-facing. The Ricin B-type lectin domain maps to P40 to L166. 2 disulfide bridges follow: C53-C67 and C92-C111. 2 N-linked (GlcNAc...) asparagine glycosylation sites follow: N101 and N139. Positions S181–I229 constitute a Fibronectin type-II domain. 4 cysteine pairs are disulfide-bonded: C186–C212, C200–C227, C265–C358, and C334–C350. The C-type lectin 1 domain occupies L243–K359. The N-linked (GlcNAc...) asparagine glycan is linked to N363. C-type lectin domains are found at residues F388 to K504, H527 to C643, K677 to K808, F831 to K950, F978 to C1106, Y1131 to C1242, and F1271 to C1391. Cystine bridges form between C409/C503, C480/C495, C617/C634, C703/C807, C784/C799, C852/C949, and C926/C941. An N-linked (GlcNAc...) asparagine glycan is attached at N1028. A disulfide bond links C1077 and C1097. K1141 participates in a covalent cross-link: Glycyl lysine isopeptide (Lys-Gly) (interchain with G-Cter in SUMO1). An intrachain disulfide couples C1219 to C1233. N1348 carries an N-linked (GlcNAc...) asparagine glycan. C1367 and C1382 are joined by a disulfide. Residues L1414–I1434 traverse the membrane as a helical segment. Residues L1435–E1480 are Cytoplasmic-facing. Positions S1446–E1480 are disordered.

As to quaternary structure, interacts directly with PLAUR/UPAR and PLAU/pro-UPA to form a tri-molecular complex. Interacts with collagen V. Interacts with C-terminal region of type I collagen/COL1A1. N-glycosylated. Post-translationally, phosphorylated.

The protein resides in the cell membrane. In terms of biological role, may play a role as endocytotic lectin receptor displaying calcium-dependent lectin activity. Internalizes glycosylated ligands from the extracellular space for release in an endosomal compartment via clathrin-mediated endocytosis. May be involved in plasminogen activation system controlling the extracellular level of PLAUR/PLAU, and thus may regulate protease activity at the cell surface. May contribute to cellular uptake, remodeling and degradation of extracellular collagen matrices. May participate in remodeling of extracellular matrix cooperating with the matrix metalloproteinases (MMPs) secreted by hepatic stellate cells. May mediate endocytosis of partially degraded collagens and glycoproteins produced in the extracellular matrix by MMPs. The sequence is that of C-type mannose receptor 2 (Mrc2) from Rattus norvegicus (Rat).